Consider the following 322-residue polypeptide: Undecaprenyl-phosphate 4-deoxy-4-formamido-L-arabinose transferase (322 aa).

The Cytoplasmic segment spans residues 1 to 235 (MFEIHPVKKV…TCLTTTPLRM (235 aa)). A helical transmembrane segment spans residues 236–256 (LSLLGSIIAIGGFSIAVLLVI). The Periplasmic portion of the chain corresponds to 257–269 (LRLTFGPQWAAEG). The helical transmembrane segment at 270 to 290 (VFMLFAVLFTFIGAQFIGMGL) threads the bilayer. The Cytoplasmic portion of the chain corresponds to 291–322 (LGEYIGRIYTDVRARPRYFVQQVIRPSSKENE).

Belongs to the glycosyltransferase 2 family.

The protein resides in the cell inner membrane. The enzyme catalyses UDP-4-deoxy-4-formamido-beta-L-arabinose + di-trans,octa-cis-undecaprenyl phosphate = 4-deoxy-4-formamido-alpha-L-arabinopyranosyl di-trans,octa-cis-undecaprenyl phosphate + UDP. It functions in the pathway glycolipid biosynthesis; 4-amino-4-deoxy-alpha-L-arabinose undecaprenyl phosphate biosynthesis; 4-amino-4-deoxy-alpha-L-arabinose undecaprenyl phosphate from UDP-4-deoxy-4-formamido-beta-L-arabinose and undecaprenyl phosphate: step 1/2. The protein operates within bacterial outer membrane biogenesis; lipopolysaccharide biosynthesis. Functionally, catalyzes the transfer of 4-deoxy-4-formamido-L-arabinose from UDP to undecaprenyl phosphate. The modified arabinose is attached to lipid A and is required for resistance to polymyxin and cationic antimicrobial peptides. The sequence is that of Undecaprenyl-phosphate 4-deoxy-4-formamido-L-arabinose transferase from Escherichia coli O157:H7 (strain EC4115 / EHEC).